A 440-amino-acid polypeptide reads, in one-letter code: MKERILQEIKTRVNRKSWELWFSSFDVKSIEGNKVVFSVGNLFIKEWLEKKYYSVLSKAVKVVLGNDATFEITYEAFEPHSSYSEPLVKKRAVLLTPLNPDYTFENFVVGPGNSFAYHAALEVAKHPGRYNPLFIYGGVGLGKTHLLQSIGNYVVQNEPDLRVMYITSEKFLNDLVDSMKEGKLNEFREKYRKKVDILLIDDVQFLIGKTGVQTELFHTFNELHDSGKQIVICSDREPQKLSEFQDRLVSRFQMGLVAKLEPPDEETRKSIARKMLEIEHGELPEEVLNFVAENVDDNLRRLRGAIIKLLVYKETTGKEVDLKEAILLLKDFIKSNRVKAMDPIDELIEIVAKVTGASREEILSNSRNVKALTARRIGMYVAKNYLKSSLRTIAEKFNRSHPVVVDSVKKVKDSLLKGNKQLKALIDEVIGEISRRALSG.

The segment at Met1–Thr69 is domain I, interacts with DnaA modulators. Positions Thr69–Thr96 are domain II. Residues Pro97–Lys313 form a domain III, AAA+ region region. Residues Gly140, Gly142, Lys143, and Thr144 each coordinate ATP. The domain IV, binds dsDNA stretch occupies residues Glu314–Gly440.

This sequence belongs to the DnaA family. Oligomerizes as a right-handed, spiral filament on DNA at oriC.

The protein resides in the cytoplasm. Plays an essential role in the initiation and regulation of chromosomal replication. ATP-DnaA binds to the origin of replication (oriC) to initiate formation of the DNA replication initiation complex once per cell cycle. Binds the DnaA box (a 9 base pair repeat at the origin) and separates the double-stranded (ds)DNA. Forms a right-handed helical filament on oriC DNA; dsDNA binds to the exterior of the filament while single-stranded (ss)DNA is stabiized in the filament's interior. The ATP-DnaA-oriC complex binds and stabilizes one strand of the AT-rich DNA unwinding element (DUE), permitting loading of DNA polymerase. After initiation quickly degrades to an ADP-DnaA complex that is not apt for DNA replication. Binds acidic phospholipids. This is Chromosomal replication initiator protein DnaA from Thermotoga sp. (strain RQ2).